The primary structure comprises 397 residues: Elongation factor Tu (397 aa).

One can recognise a tr-type G domain in the interval 10 to 206 (KPHVNIGTIG…AVDENIPQPE (197 aa)). The tract at residues 19-26 (GHVDHGKT) is G1. 19-26 (GHVDHGKT) is a binding site for GTP. Position 26 (threonine 26) interacts with Mg(2+). The interval 62-66 (GITIS) is G2. A G3 region spans residues 83–86 (DCPG). Residues 83 to 87 (DCPGH) and 138 to 141 (NKAD) contribute to the GTP site. The segment at 138–141 (NKAD) is G4. Residues 176-178 (SAL) are G5.

This sequence belongs to the TRAFAC class translation factor GTPase superfamily. Classic translation factor GTPase family. EF-Tu/EF-1A subfamily. As to quaternary structure, monomer.

The protein localises to the cytoplasm. It carries out the reaction GTP + H2O = GDP + phosphate + H(+). Functionally, GTP hydrolase that promotes the GTP-dependent binding of aminoacyl-tRNA to the A-site of ribosomes during protein biosynthesis. The protein is Elongation factor Tu of Streptomyces cinnamoneus (Streptoverticillium cinnamoneum).